We begin with the raw amino-acid sequence, 551 residues long: uncharacterized protein (551 aa).

Residues 1-7 (MKKNSSV) are Cytoplasmic-facing. A helical membrane pass occupies residues 8–28 (VFFLVGLSQFVTMAFLIIGSI). Topologically, residues 29-88 (TAPIFKQIGYSKYDEITYGTFGYCKEGSCSKASYNYHPDELSDSDSNWKLNSNARSILGK) are vacuolar. A helical transmembrane segment spans residues 89–109 (IIFITPIAAGLNFLGFLCTIM). The Cytoplasmic segment spans residues 110–135 (SVLLINVLSSDRVGSASAIMFFVNLT). Residues 136 to 156 (FSTLGFLSASLICIVVFLLFY) traverse the membrane as a helical segment. At 157–160 (PHVT) the chain is on the vacuolar side. The helical transmembrane segment at 161–181 (WCSWVLIPGAALSLLVIPLIF) threads the bilayer. Residues 182-551 (SAYSRSSGSR…TSLNNPYGFR (370 aa)) lie on the Cytoplasmic side of the membrane. 2 positions are modified to phosphoserine: serine 224 and serine 232. The disordered stretch occupies residues 280 to 341 (AKDMENSNGS…NGSNTSNNIN (62 aa)). Residues 307-320 (TSTYSVIESESGLK) show a composition bias toward polar residues. Over residues 321–341 (NGSVSNNYVRNNGSNTSNNIN) the composition is skewed to low complexity. Residue serine 363 is modified to Phosphoserine.

In terms of assembly, forms homo dimers or homooligomers in MCC microdomains. Interacts with BOI2 and RHO3, two key regulators of secretion.

The protein resides in the vacuole membrane. The protein localises to the cell membrane. In terms of biological role, protein involved in secretion and cell wall organization. Contributes to cell surface-related functions as a auxiliary component of MCC/eisosome that specifically interacts with the secretory pathway. This is an uncharacterized protein from Saccharomyces cerevisiae (strain ATCC 204508 / S288c) (Baker's yeast).